A 427-amino-acid polypeptide reads, in one-letter code: Glutamate-1-semialdehyde 2,1-aminomutase (427 aa).

At lysine 265 the chain carries N6-(pyridoxal phosphate)lysine.

This sequence belongs to the class-III pyridoxal-phosphate-dependent aminotransferase family. HemL subfamily. In terms of assembly, homodimer. The cofactor is pyridoxal 5'-phosphate.

Its subcellular location is the cytoplasm. The enzyme catalyses (S)-4-amino-5-oxopentanoate = 5-aminolevulinate. The protein operates within porphyrin-containing compound metabolism; protoporphyrin-IX biosynthesis; 5-aminolevulinate from L-glutamyl-tRNA(Glu): step 2/2. This Bordetella pertussis (strain Tohama I / ATCC BAA-589 / NCTC 13251) protein is Glutamate-1-semialdehyde 2,1-aminomutase.